A 229-amino-acid polypeptide reads, in one-letter code: Potassium/proton antiporter CemA (229 aa).

Helical transmembrane passes span 6–26 (AFIP…ISLC), 107–127 (ILHF…SFWA), and 189–209 (ILSG…KYWI).

This sequence belongs to the CemA family.

The protein localises to the plastid. Its subcellular location is the chloroplast inner membrane. The catalysed reaction is K(+)(in) + H(+)(out) = K(+)(out) + H(+)(in). Contributes to K(+)/H(+) antiport activity by supporting proton efflux to control proton extrusion and homeostasis in chloroplasts in a light-dependent manner to modulate photosynthesis. Prevents excessive induction of non-photochemical quenching (NPQ) under continuous-light conditions. Indirectly promotes efficient inorganic carbon uptake into chloroplasts. This chain is Potassium/proton antiporter CemA, found in Crucihimalaya wallichii (Rock-cress).